Consider the following 180-residue polypeptide: UPF0340 protein LACR_0494 (180 aa).

It belongs to the UPF0340 family.

This Lactococcus lactis subsp. cremoris (strain SK11) protein is UPF0340 protein LACR_0494.